We begin with the raw amino-acid sequence, 1393 residues long: RNA polymerase II-associated protein 1 (1393 aa).

3 disordered regions span residues Lys34 to His53, Asn61 to Arg94, and Ser266 to Leu295. Pro residues predominate over residues Asp64–Pro74. Ser72 carries the post-translational modification Phosphoserine. Thr321 is subject to Phosphothreonine. A disordered region spans residues Pro496–Ala531. The span at Asp500–Cys510 shows a compositional bias: acidic residues. Basic and acidic residues predominate over residues Lys518–Ala531. Position 1121 is a phosphoserine (Ser1121).

It belongs to the RPAP1 family. As to quaternary structure, part of an RNA polymerase II complex that contains POLR2A, POLR2B, POLR2C, POLR2D, POLR2E, POLR2F, POLR2G, POLR2H, POLR2I, POLR2J, POLR2K, POLR2L, RPAP1, FCP1 plus the general transcription factors TFIIB and TFIIF.

Its subcellular location is the nucleus. In terms of biological role, forms an interface between the RNA polymerase II enzyme and chaperone/scaffolding protein, suggesting that it is required to connect RNA polymerase II to regulators of protein complex formation. Required for interaction of the RNA polymerase II complex with acetylated histone H3. This Homo sapiens (Human) protein is RNA polymerase II-associated protein 1 (RPAP1).